A 207-amino-acid polypeptide reads, in one-letter code: uncharacterized protein (207 aa).

Catalysis depends on residues Arg-80, Glu-88, and Arg-148.

This sequence belongs to the thermonuclease family.

This is an uncharacterized protein from Methanocaldococcus jannaschii (strain ATCC 43067 / DSM 2661 / JAL-1 / JCM 10045 / NBRC 100440) (Methanococcus jannaschii).